A 264-amino-acid chain; its full sequence is 3-methyl-2-oxobutanoate hydroxymethyltransferase (264 aa).

The Mg(2+) site is built by Asp-45 and Asp-84. 3-methyl-2-oxobutanoate is bound by residues Asp-45–Ser-46, Asp-84, and Lys-112. Glu-114 lines the Mg(2+) pocket. Glu-181 functions as the Proton acceptor in the catalytic mechanism.

This sequence belongs to the PanB family. As to quaternary structure, homodecamer; pentamer of dimers. Mg(2+) is required as a cofactor.

The protein localises to the cytoplasm. It catalyses the reaction 3-methyl-2-oxobutanoate + (6R)-5,10-methylene-5,6,7,8-tetrahydrofolate + H2O = 2-dehydropantoate + (6S)-5,6,7,8-tetrahydrofolate. It functions in the pathway cofactor biosynthesis; (R)-pantothenate biosynthesis; (R)-pantoate from 3-methyl-2-oxobutanoate: step 1/2. Its function is as follows. Catalyzes the reversible reaction in which hydroxymethyl group from 5,10-methylenetetrahydrofolate is transferred onto alpha-ketoisovalerate to form ketopantoate. The sequence is that of 3-methyl-2-oxobutanoate hydroxymethyltransferase from Pectobacterium atrosepticum (strain SCRI 1043 / ATCC BAA-672) (Erwinia carotovora subsp. atroseptica).